A 427-amino-acid polypeptide reads, in one-letter code: Enolase (427 aa).

Gln162 serves as a coordination point for (2R)-2-phosphoglycerate. Glu204 serves as the catalytic Proton donor. Residues Asp241, Glu284, and Asp311 each contribute to the Mg(2+) site. Positions 336, 365, 366, and 387 each coordinate (2R)-2-phosphoglycerate. Residue Lys336 is the Proton acceptor of the active site.

The protein belongs to the enolase family. The cofactor is Mg(2+).

The protein localises to the cytoplasm. It is found in the secreted. It localises to the cell surface. It carries out the reaction (2R)-2-phosphoglycerate = phosphoenolpyruvate + H2O. It participates in carbohydrate degradation; glycolysis; pyruvate from D-glyceraldehyde 3-phosphate: step 4/5. Its function is as follows. Catalyzes the reversible conversion of 2-phosphoglycerate (2-PG) into phosphoenolpyruvate (PEP). It is essential for the degradation of carbohydrates via glycolysis. The chain is Enolase from Corynebacterium kroppenstedtii (strain DSM 44385 / JCM 11950 / CIP 105744 / CCUG 35717).